We begin with the raw amino-acid sequence, 248 residues long: 3-deoxy-manno-octulosonate cytidylyltransferase (248 aa).

Belongs to the KdsB family.

The protein resides in the cytoplasm. It catalyses the reaction 3-deoxy-alpha-D-manno-oct-2-ulosonate + CTP = CMP-3-deoxy-beta-D-manno-octulosonate + diphosphate. It functions in the pathway nucleotide-sugar biosynthesis; CMP-3-deoxy-D-manno-octulosonate biosynthesis; CMP-3-deoxy-D-manno-octulosonate from 3-deoxy-D-manno-octulosonate and CTP: step 1/1. The protein operates within bacterial outer membrane biogenesis; lipopolysaccharide biosynthesis. Activates KDO (a required 8-carbon sugar) for incorporation into bacterial lipopolysaccharide in Gram-negative bacteria. The chain is 3-deoxy-manno-octulosonate cytidylyltransferase from Klebsiella pneumoniae subsp. pneumoniae (strain ATCC 700721 / MGH 78578).